Here is a 398-residue protein sequence, read N- to C-terminus: Interleukin-1 receptor type 2 (398 aa).

Residues Met-1 to Ala-13 form the signal peptide. The Extracellular segment spans residues Phe-14 to Glu-343. Ig-like C2-type domains follow at residues Pro-18–Arg-124, Pro-134–Ser-223, and Pro-237–Ser-349. 3 disulfides stabilise this stretch: Cys-28-Cys-116, Cys-50-Cys-108, and Cys-152-Cys-207. Asn-66, Asn-72, and Asn-112 each carry an N-linked (GlcNAc...) asparagine glycan. N-linked (GlcNAc...) asparagine glycosylation is found at Asn-219 and Asn-277. Cysteines 258 and 326 form a disulfide. A contains proteolytic cleavage site region spans residues His-329 to Glu-343. The chain crosses the membrane as a helical span at residues Ala-344 to Met-369. The Cytoplasmic segment spans residues His-370–Lys-398.

This sequence belongs to the interleukin-1 receptor family. In terms of assembly, associates with IL1RAP to form a non-signaling interleukin-1 receptor complex. A soluble form (sIL1R2) can also be produced by proteolytic cleavage at the cell surface (shedding) involving a metalloproteinase; hovever, several sIL1R2 forms ranging from 45 and 60 kDa are reported.

The protein resides in the secreted. It is found in the cell membrane. Non-signaling receptor for IL1A, IL1B and IL1RN. Reduces IL1B activities. Serves as a decoy receptor by competitive binding to IL1B and preventing its binding to IL1R1. Also modulates cellular response through non-signaling association with IL1RAP after binding to IL1B. IL1R2 (membrane and secreted forms) preferentially binds IL1B and poorly IL1A and IL1RN. The secreted IL1R2 recruits secreted IL1RAP with high affinity; this complex formation may be the dominant mechanism for neutralization of IL1B by secreted/soluble receptors. This Homo sapiens (Human) protein is Interleukin-1 receptor type 2 (IL1R2).